Consider the following 240-residue polypeptide: uncharacterized protein (240 aa).

Asp66 (proton acceptor) is an active-site residue. Residue Asp129 is part of the active site. The active-site Proton acceptor is His131.

The protein belongs to the glucosamine/galactosamine-6-phosphate isomerase family.

This is an uncharacterized protein from Escherichia coli (strain K12).